Reading from the N-terminus, the 118-residue chain is Ribonuclease P protein component (118 aa).

The protein belongs to the RnpA family. In terms of assembly, consists of a catalytic RNA component (M1 or rnpB) and a protein subunit.

The enzyme catalyses Endonucleolytic cleavage of RNA, removing 5'-extranucleotides from tRNA precursor.. Its function is as follows. RNaseP catalyzes the removal of the 5'-leader sequence from pre-tRNA to produce the mature 5'-terminus. It can also cleave other RNA substrates such as 4.5S RNA. The protein component plays an auxiliary but essential role in vivo by binding to the 5'-leader sequence and broadening the substrate specificity of the ribozyme. The chain is Ribonuclease P protein component from Bifidobacterium animalis subsp. lactis (strain AD011).